Consider the following 122-residue polypeptide: Small ribosomal subunit protein uS13 (122 aa).

A disordered region spans residues 95-122 (GLPVHGQRTKTNARTRKGPARTVAGKKK).

Belongs to the universal ribosomal protein uS13 family. In terms of assembly, part of the 30S ribosomal subunit. Forms a loose heterodimer with protein S19. Forms two bridges to the 50S subunit in the 70S ribosome.

Located at the top of the head of the 30S subunit, it contacts several helices of the 16S rRNA. In the 70S ribosome it contacts the 23S rRNA (bridge B1a) and protein L5 of the 50S subunit (bridge B1b), connecting the 2 subunits; these bridges are implicated in subunit movement. Contacts the tRNAs in the A and P-sites. This chain is Small ribosomal subunit protein uS13, found in Geotalea uraniireducens (strain Rf4) (Geobacter uraniireducens).